A 704-amino-acid chain; its full sequence is Polyribonucleotide nucleotidyltransferase (704 aa).

Asp-491 and Asp-497 together coordinate Mg(2+). In terms of domain architecture, KH spans 558-617; it reads PNYAVIEINSDKIRDVIGKGGATIRQLTEDTGAVIDIDDNGTIRIFGENKAATKEAIRQI. The 69-residue stretch at 627-695 folds into the S1 motif domain; that stretch reads GKVYKGTVAR…NRGRIKLTMK (69 aa).

This sequence belongs to the polyribonucleotide nucleotidyltransferase family. In terms of assembly, component of the RNA degradosome, which is a multiprotein complex involved in RNA processing and mRNA degradation. Requires Mg(2+) as cofactor.

It localises to the cytoplasm. It catalyses the reaction RNA(n+1) + phosphate = RNA(n) + a ribonucleoside 5'-diphosphate. Functionally, involved in mRNA degradation. Catalyzes the phosphorolysis of single-stranded polyribonucleotides processively in the 3'- to 5'-direction. The chain is Polyribonucleotide nucleotidyltransferase from Psychrobacter sp. (strain PRwf-1).